The chain runs to 356 residues: Heat-inducible transcription repressor HrcA (356 aa).

This sequence belongs to the HrcA family.

Functionally, negative regulator of class I heat shock genes (grpE-dnaK-dnaJ and groELS operons). Prevents heat-shock induction of these operons. This is Heat-inducible transcription repressor HrcA from Chelativorans sp. (strain BNC1).